A 176-amino-acid polypeptide reads, in one-letter code: MSGAGSAGMARGLRVDGLPPLPKSLSGLLHSAAGGAAGGWRHLERLYAQKSRIQDELNRGGAGGGGARAAGMRTKPPNLDAALALLRKEMVGLRQLDMTLLCQLYGLYESIQEYKGACQAASSLDCNYALENGFFDDDEDFQEQGSLRDGQGRGSPGDPSLPLTHLSSSDWILESI.

Positions 140–165 are disordered; that stretch reads DFQEQGSLRDGQGRGSPGDPSLPLTH.

The protein belongs to the FAM89 family.

This Rattus norvegicus (Rat) protein is Protein FAM89A (Fam89a).